A 565-amino-acid polypeptide reads, in one-letter code: Dihydroxy-acid dehydratase (565 aa).

Asp83 serves as a coordination point for Mg(2+). Cys124 serves as a coordination point for [2Fe-2S] cluster. Asp125 and Lys126 together coordinate Mg(2+). Lys126 carries the post-translational modification N6-carboxylysine. Cys197 contacts [2Fe-2S] cluster. Glu451 contacts Mg(2+). Ser477 (proton acceptor) is an active-site residue.

It belongs to the IlvD/Edd family. Homodimer. It depends on [2Fe-2S] cluster as a cofactor. Mg(2+) serves as cofactor.

It carries out the reaction (2R)-2,3-dihydroxy-3-methylbutanoate = 3-methyl-2-oxobutanoate + H2O. The catalysed reaction is (2R,3R)-2,3-dihydroxy-3-methylpentanoate = (S)-3-methyl-2-oxopentanoate + H2O. It participates in amino-acid biosynthesis; L-isoleucine biosynthesis; L-isoleucine from 2-oxobutanoate: step 3/4. It functions in the pathway amino-acid biosynthesis; L-valine biosynthesis; L-valine from pyruvate: step 3/4. Functionally, functions in the biosynthesis of branched-chain amino acids. Catalyzes the dehydration of (2R,3R)-2,3-dihydroxy-3-methylpentanoate (2,3-dihydroxy-3-methylvalerate) into 2-oxo-3-methylpentanoate (2-oxo-3-methylvalerate) and of (2R)-2,3-dihydroxy-3-methylbutanoate (2,3-dihydroxyisovalerate) into 2-oxo-3-methylbutanoate (2-oxoisovalerate), the penultimate precursor to L-isoleucine and L-valine, respectively. The sequence is that of Dihydroxy-acid dehydratase from Symbiobacterium thermophilum (strain DSM 24528 / JCM 14929 / IAM 14863 / T).